A 939-amino-acid chain; its full sequence is Isoleucine--tRNA ligase (939 aa).

Positions 59–69 (PYANGDIHIGH) match the 'HIGH' region motif. Glu570 is an L-isoleucyl-5'-AMP binding site. Residues 611 to 615 (KMSKS) carry the 'KMSKS' region motif. An ATP-binding site is contributed by Lys614. Positions 902, 905, 922, and 925 each coordinate Zn(2+).

This sequence belongs to the class-I aminoacyl-tRNA synthetase family. IleS type 1 subfamily. In terms of assembly, monomer. The cofactor is Zn(2+).

It localises to the cytoplasm. The enzyme catalyses tRNA(Ile) + L-isoleucine + ATP = L-isoleucyl-tRNA(Ile) + AMP + diphosphate. Its function is as follows. Catalyzes the attachment of isoleucine to tRNA(Ile). As IleRS can inadvertently accommodate and process structurally similar amino acids such as valine, to avoid such errors it has two additional distinct tRNA(Ile)-dependent editing activities. One activity is designated as 'pretransfer' editing and involves the hydrolysis of activated Val-AMP. The other activity is designated 'posttransfer' editing and involves deacylation of mischarged Val-tRNA(Ile). The chain is Isoleucine--tRNA ligase from Nitrosomonas europaea (strain ATCC 19718 / CIP 103999 / KCTC 2705 / NBRC 14298).